Reading from the N-terminus, the 365-residue chain is Phospho-N-acetylmuramoyl-pentapeptide-transferase (365 aa).

10 consecutive transmembrane segments (helical) span residues 22 to 42, 74 to 94, 95 to 115, 134 to 154, 168 to 188, 201 to 221, 240 to 260, 267 to 287, 292 to 312, and 342 to 362; these read YISV…LALG, TMGG…WGDL, TSIY…IGFF, KFAL…YLLS, SLYI…IING, GLAI…AYIE, LAEV…FLWF, VFMG…IAVM, LIFF…MLQV, and KVVI…LAAI.

Belongs to the glycosyltransferase 4 family. MraY subfamily. Requires Mg(2+) as cofactor.

It localises to the cell inner membrane. The catalysed reaction is UDP-N-acetyl-alpha-D-muramoyl-L-alanyl-gamma-D-glutamyl-meso-2,6-diaminopimeloyl-D-alanyl-D-alanine + di-trans,octa-cis-undecaprenyl phosphate = di-trans,octa-cis-undecaprenyl diphospho-N-acetyl-alpha-D-muramoyl-L-alanyl-D-glutamyl-meso-2,6-diaminopimeloyl-D-alanyl-D-alanine + UMP. It functions in the pathway cell wall biogenesis; peptidoglycan biosynthesis. Functionally, catalyzes the initial step of the lipid cycle reactions in the biosynthesis of the cell wall peptidoglycan: transfers peptidoglycan precursor phospho-MurNAc-pentapeptide from UDP-MurNAc-pentapeptide onto the lipid carrier undecaprenyl phosphate, yielding undecaprenyl-pyrophosphoryl-MurNAc-pentapeptide, known as lipid I. The chain is Phospho-N-acetylmuramoyl-pentapeptide-transferase from Francisella tularensis subsp. mediasiatica (strain FSC147).